The following is a 193-amino-acid chain: Phosphoheptose isomerase (193 aa).

The 157-residue stretch at 37-193 (LADSFKVGGK…QLIEKEMVKA (157 aa)) folds into the SIS domain. 52 to 54 (NGG) is a binding site for substrate. Positions 61 and 65 each coordinate Zn(2+). Residues Glu-65, 93 to 94 (ND), 119 to 121 (STS), Ser-124, and Gln-172 contribute to the substrate site. Positions 172 and 180 each coordinate Zn(2+).

The protein belongs to the SIS family. GmhA subfamily. As to quaternary structure, homotetramer. It depends on Zn(2+) as a cofactor.

Its subcellular location is the cytoplasm. It carries out the reaction 2 D-sedoheptulose 7-phosphate = D-glycero-alpha-D-manno-heptose 7-phosphate + D-glycero-beta-D-manno-heptose 7-phosphate. Its pathway is carbohydrate biosynthesis; D-glycero-D-manno-heptose 7-phosphate biosynthesis; D-glycero-alpha-D-manno-heptose 7-phosphate and D-glycero-beta-D-manno-heptose 7-phosphate from sedoheptulose 7-phosphate: step 1/1. The protein operates within bacterial outer membrane biogenesis; LPS core biosynthesis. In terms of biological role, catalyzes the isomerization of sedoheptulose 7-phosphate in D-glycero-D-manno-heptose 7-phosphate. In Photorhabdus laumondii subsp. laumondii (strain DSM 15139 / CIP 105565 / TT01) (Photorhabdus luminescens subsp. laumondii), this protein is Phosphoheptose isomerase.